The primary structure comprises 472 residues: 3-isopropylmalate dehydratase large subunit (472 aa).

The [4Fe-4S] cluster site is built by C353, C414, and C417.

It belongs to the aconitase/IPM isomerase family. LeuC type 1 subfamily. As to quaternary structure, heterodimer of LeuC and LeuD. [4Fe-4S] cluster is required as a cofactor.

The enzyme catalyses (2R,3S)-3-isopropylmalate = (2S)-2-isopropylmalate. It functions in the pathway amino-acid biosynthesis; L-leucine biosynthesis; L-leucine from 3-methyl-2-oxobutanoate: step 2/4. Catalyzes the isomerization between 2-isopropylmalate and 3-isopropylmalate, via the formation of 2-isopropylmaleate. The protein is 3-isopropylmalate dehydratase large subunit of Psychrobacter arcticus (strain DSM 17307 / VKM B-2377 / 273-4).